A 227-amino-acid chain; its full sequence is Small ribosomal subunit protein uS3 (227 aa).

The KH type-2 domain occupies 38–106 (LRKFIKDRFY…NVNINIQEIR (69 aa)).

This sequence belongs to the universal ribosomal protein uS3 family. As to quaternary structure, part of the 30S ribosomal subunit. Forms a tight complex with proteins S10 and S14.

Binds the lower part of the 30S subunit head. Binds mRNA in the 70S ribosome, positioning it for translation. This is Small ribosomal subunit protein uS3 from Syntrophomonas wolfei subsp. wolfei (strain DSM 2245B / Goettingen).